Reading from the N-terminus, the 647-residue chain is Neuronal PAS domain-containing protein 4-like (647 aa).

The interval 16 to 29 (KRFRSTKGASKARR) is basic motif; degenerate. Residues 16-67 (KRFRSTKGASKARRDQMNSEIRNLRALLPISPEHRLSYLHSMSITCTYIRKS) enclose the bHLH domain. Residues 30–67 (DQMNSEIRNLRALLPISPEHRLSYLHSMSITCTYIRKS) form a helix-loop-helix motif region. 2 PAS domains span residues 117 to 181 (VLQA…SPSG) and 238 to 274 (SADM…HPDD).

In terms of assembly, heterodimer; efficient DNA binding requires dimerization with another bHLH protein. Specifically expressed in endothelial and hematopoietic precursor cells.

Its subcellular location is the nucleus. Functionally, transcription factor specifically expressed in endothelial and hematopoietic precursor cells that acts as a key regulator of the endothelial differentiation cascade. Acts as an early-response transcription factor that regulates the expression of early regulators of endothelial and haematopoietic differentiation, such as etv2 and tal1. The protein is Neuronal PAS domain-containing protein 4-like of Danio rerio (Zebrafish).